We begin with the raw amino-acid sequence, 333 residues long: DNA-directed RNA polymerase subunit alpha (333 aa).

The alpha N-terminal domain (alpha-NTD) stretch occupies residues Met-1 to Lys-234. The alpha C-terminal domain (alpha-CTD) stretch occupies residues Ile-248–Ala-333.

The protein belongs to the RNA polymerase alpha chain family. In terms of assembly, homodimer. The RNAP catalytic core consists of 2 alpha, 1 beta, 1 beta' and 1 omega subunit. When a sigma factor is associated with the core the holoenzyme is formed, which can initiate transcription.

The enzyme catalyses RNA(n) + a ribonucleoside 5'-triphosphate = RNA(n+1) + diphosphate. DNA-dependent RNA polymerase catalyzes the transcription of DNA into RNA using the four ribonucleoside triphosphates as substrates. The sequence is that of DNA-directed RNA polymerase subunit alpha from Pseudomonas fluorescens (strain ATCC BAA-477 / NRRL B-23932 / Pf-5).